Reading from the N-terminus, the 311-residue chain is Ornithine carbamoyltransferase (311 aa).

Carbamoyl phosphate contacts are provided by residues 54-57 (STRT), Q81, R105, and 132-135 (HPCQ). Residues N163, D221, and 225 to 226 (SM) each bind L-ornithine. Residues 261–262 (CL) and R289 each bind carbamoyl phosphate.

The protein belongs to the aspartate/ornithine carbamoyltransferase superfamily. OTCase family.

It is found in the cytoplasm. It carries out the reaction carbamoyl phosphate + L-ornithine = L-citrulline + phosphate + H(+). It functions in the pathway amino-acid degradation; L-arginine degradation via ADI pathway; carbamoyl phosphate from L-arginine: step 2/2. Its function is as follows. Reversibly catalyzes the transfer of the carbamoyl group from carbamoyl phosphate (CP) to the N(epsilon) atom of ornithine (ORN) to produce L-citrulline. This Azoarcus sp. (strain BH72) protein is Ornithine carbamoyltransferase.